The chain runs to 57 residues: Small hydrophobic protein (57 aa).

Over 1–8 the chain is Virion surface; the sequence is MPAIQPPL. Residues 9–29 form a helical membrane-spanning segment; sequence YLTFLLLMLLYRIITLYVWSL. The Intravirion segment spans residues 30 to 57; the sequence is STITYKTSVRHASLYQRSFFRWSVDHSL.

Belongs to the rubulavirus small hydrophobic protein family. As to quaternary structure, interacts with host TNFRSF1A, RIPK1 and IRAK1; these interactions interfere with host NF-kappa-B activation at the level of receptor complexes. Interacts with host protein UBQLN4.

Its subcellular location is the virion membrane. The protein localises to the host cell membrane. Its function is as follows. Plays a role in the inhibition of the host NF-kappa-B pathway. This inhibition occurs at the receptor level, by preventing the signaling of TNFR1 as well as IL-1R and TLR3. The sequence is that of Small hydrophobic protein (SH) from Mumps virus (strain Edingburgh 4) (MuV).